A 277-amino-acid polypeptide reads, in one-letter code: MAIKSYKPTSAGRRNMTTSDFAEITKTTPEKSLLAKKSKTGARNASGRMTVRHHAGGHKQAYRIVDFKRTKDDKTATVKAIEYDPNRTANIALLVYEDGIKSYILAPKGLKVGDKVQSGPDADIKPGNALPLSAIPEGTLIHNIELKPGKGGQLARSAGASAQILGRDGKYIIVRLTSGEVRLVLATNRATIGEVGNAEHSLINWGKAGRNRWRGKRPHVRGSVMNPNDHPHGGGEGKAPVGRPSPMSPWGKKTAGKKTRDKKKASTKFIVRGRKSK.

Residues 212–277 (RWRGKRPHVR…KFIVRGRKSK (66 aa)) form a disordered region. Basic residues predominate over residues 254 to 277 (TAGKKTRDKKKASTKFIVRGRKSK).

It belongs to the universal ribosomal protein uL2 family. Part of the 50S ribosomal subunit. Forms a bridge to the 30S subunit in the 70S ribosome.

Functionally, one of the primary rRNA binding proteins. Required for association of the 30S and 50S subunits to form the 70S ribosome, for tRNA binding and peptide bond formation. It has been suggested to have peptidyltransferase activity; this is somewhat controversial. Makes several contacts with the 16S rRNA in the 70S ribosome. This Leuconostoc mesenteroides subsp. mesenteroides (strain ATCC 8293 / DSM 20343 / BCRC 11652 / CCM 1803 / JCM 6124 / NCDO 523 / NBRC 100496 / NCIMB 8023 / NCTC 12954 / NRRL B-1118 / 37Y) protein is Large ribosomal subunit protein uL2.